A 436-amino-acid chain; its full sequence is MENLNLALVSSPKPLLLGHSSSKNVFSGRKSFTFGTFRVSANSSSSHVTRAASKSHQNLKSVQGKVNAHDFASISSSNGQETTSVGVSPQLSPPPPSTVGSPLFWIGIGVGFSALFSVVASRVKKYAMQQAFKSMMGQMNTQNNPFDSGAFSSGPPFPFPMPSASGPATPAGFAGNQSQATSTRSASQSTVTVDIPATKVEAAAPAPDINVKEEVEVKNEPKKSAFVDVSPEETVQKNAFERFKDVDESSSFKEARAPAEASQNGTPFKQGFGDSPSSPSERKSALSVDALEKMMEDPTVQQMVYPYLPEEMRNPSTFKWMMQNPEYRQQLEAMLNNMGGGTEWDSRMMDTLKNFDLNSPDVKQQFDQIGLSPQEVISKIMANPDVAMAFQNPRVQAAIMDCSQNPMSIVKYQNDKEVMDVFNKISELFPGVSGPP.

A chloroplast-targeting transit peptide spans 1-39; sequence MENLNLALVSSPKPLLLGHSSSKNVFSGRKSFTFGTFRV. The transit peptide at 40–72 directs the protein to the chloroplast; inner membrane; that stretch reads SANSSSSHVTRAASKSHQNLKSVQGKVNAHDFA. Topologically, residues 73–98 are chloroplast intermembrane; it reads SISSSNGQETTSVGVSPQLSPPPPST. The segment covering 74-90 has biased composition (polar residues); it reads ISSSNGQETTSVGVSPQ. The tract at residues 74–95 is disordered; it reads ISSSNGQETTSVGVSPQLSPPP. A helical membrane pass occupies residues 99-119; the sequence is VGSPLFWIGIGVGFSALFSVV. At 120 to 436 the chain is on the stromal side; that stretch reads ASRVKKYAMQ…ELFPGVSGPP (317 aa). 2 disordered regions span residues 160-191 and 245-285; these read PMPSASGPATPAGFAGNQSQATSTRSASQSTV and DVDE…RKSA. Low complexity predominate over residues 177 to 191; it reads QSQATSTRSASQSTV. The span at 245–257 shows a compositional bias: basic and acidic residues; that stretch reads DVDESSSFKEARA. STI1 domains lie at 297–331 and 373–412; these read DPTVQQMVYPYLPEEMRNPSTFKWMMQNPEYRQQL and PQEVISKIMANPDVAMAFQNPRVQAAIMDCSQNPMSIVKY.

In terms of assembly, part of the Tic complex. Interacts with HSP93, TIC110, TIC62 and TOC75.

It localises to the plastid. The protein localises to the chloroplast inner membrane. Functionally, involved in protein precursor import into chloroplasts. Part of the motor complex consisting of a co-chaperone (TIC40) and a chaperone (HSP93) associated with the import channel (TIC110). Causes the release of bound transit peptides from TIC110 and stimulates ATP hydrolysis by HSP93. Involved in reinsertion of proteins from the chloroplast stroma into the inner membrane. The sequence is that of Protein TIC 40, chloroplastic (TIC40) from Pisum sativum (Garden pea).